A 300-amino-acid polypeptide reads, in one-letter code: NADH-ubiquinone oxidoreductase chain 2 (300 aa).

9 helical membrane passes run 4–24 (FFCI…NVLV), 29–49 (FLLM…YVGI), 58–78 (SLGL…IVMM), 87–107 (FWVF…FLTF), 122–142 (FSAF…LFVL), 165–185 (FLSV…MAFL), 201–221 (VLLV…IFVL), 231–251 (FLLF…LWLV), and 267–287 (VLFF…FSKI).

Belongs to the complex I subunit 2 family.

The protein resides in the mitochondrion inner membrane. It catalyses the reaction a ubiquinone + NADH + 5 H(+)(in) = a ubiquinol + NAD(+) + 4 H(+)(out). Its function is as follows. Core subunit of the mitochondrial membrane respiratory chain NADH dehydrogenase (Complex I) that is believed to belong to the minimal assembly required for catalysis. Complex I functions in the transfer of electrons from NADH to the respiratory chain. The immediate electron acceptor for the enzyme is believed to be ubiquinone. The chain is NADH-ubiquinone oxidoreductase chain 2 (ND2) from Ascaris suum (Pig roundworm).